We begin with the raw amino-acid sequence, 550 residues long: Probable methionine--tRNA ligase, cytoplasmic (550 aa).

Positions 10 to 20 (PYVNNQPHLGN) match the 'HIGH' region motif. The 'KMSKS' region motif lies at 328–332 (KFSKS). ATP is bound at residue K331.

The protein belongs to the class-I aminoacyl-tRNA synthetase family.

It localises to the cytoplasm. The enzyme catalyses tRNA(Met) + L-methionine + ATP = L-methionyl-tRNA(Met) + AMP + diphosphate. This is Probable methionine--tRNA ligase, cytoplasmic from Encephalitozoon cuniculi (strain GB-M1) (Microsporidian parasite).